The sequence spans 244 residues: Zinc import ATP-binding protein ZnuC 2 (244 aa).

In terms of domain architecture, ABC transporter spans 3–218; it reads IGCASLTIQL…PEYLALFGID (216 aa). ATP is bound at residue 35 to 42; sequence GPNGSGKT.

Belongs to the ABC transporter superfamily. Zinc importer (TC 3.A.1.15.5) family. The complex is composed of two ATP-binding proteins (ZnuC), two transmembrane proteins (ZnuB) and a solute-binding protein (ZnuA).

The protein localises to the cell inner membrane. It catalyses the reaction Zn(2+)(out) + ATP(in) + H2O(in) = Zn(2+)(in) + ADP(in) + phosphate(in) + H(+)(in). Part of the ABC transporter complex ZnuABC involved in zinc import. Responsible for energy coupling to the transport system. The chain is Zinc import ATP-binding protein ZnuC 2 from Hahella chejuensis (strain KCTC 2396).